The sequence spans 76 residues: Small ribosomal subunit protein bS18 (76 aa).

This sequence belongs to the bacterial ribosomal protein bS18 family. Part of the 30S ribosomal subunit. Forms a tight heterodimer with protein bS6.

In terms of biological role, binds as a heterodimer with protein bS6 to the central domain of the 16S rRNA, where it helps stabilize the platform of the 30S subunit. The chain is Small ribosomal subunit protein bS18 from Nitrosomonas europaea (strain ATCC 19718 / CIP 103999 / KCTC 2705 / NBRC 14298).